A 226-amino-acid chain; its full sequence is Putative N-acetylmannosamine-6-phosphate 2-epimerase 1 (226 aa).

The protein belongs to the NanE family.

It carries out the reaction an N-acyl-D-glucosamine 6-phosphate = an N-acyl-D-mannosamine 6-phosphate. It participates in amino-sugar metabolism; N-acetylneuraminate degradation; D-fructose 6-phosphate from N-acetylneuraminate: step 3/5. Its function is as follows. Converts N-acetylmannosamine-6-phosphate (ManNAc-6-P) to N-acetylglucosamine-6-phosphate (GlcNAc-6-P). The protein is Putative N-acetylmannosamine-6-phosphate 2-epimerase 1 (nanE1) of Salmonella typhimurium (strain LT2 / SGSC1412 / ATCC 700720).